We begin with the raw amino-acid sequence, 1212 residues long: MEPRPTAPSSGAPGLAGVGETPSAAALAAARVELPGTAVPSVPEDAAPASRDGGGVRDEGPAAAGDGLGRPLGPTPSQSRFQVDLVSENAGRAAAAAAAAAAAAAAAGAGAGAKQTPADGEASGESEPAKGSEEAKGRFRVNFVDPAASSSAEDSLSDAAGVGVDGPNVSFQNGGDTVLSEGSSLHSGGGGGSGHHQHYYYDTHTNTYYLRTFGHNTMDAVPRIDHYRHTAAQLGEKLLRPSLAELHDELEKEPFEDGFANGEESTPTRDAVVTYTAESKGVVKFGWIKGVLVRCMLNIWGVMLFIRLSWIVGQAGIGLSVLVIMMATVVTTITGLSTSAIATNGFVRGGGAYYLISRSLGPEFGGAIGLIFAFANAVAVAMYVVGFAETVVELLKEHSILMIDEINDIRIIGAITVVILLGISVAGMEWEAKAQIVLLVILLLAIGDFVIGTFIPLESKKPKGFFGYKSEIFNENFGPDFREEETFFSVFAIFFPAATGILAGANISGDLADPQSAIPKGTLLAILITTLVYVGIAVSVGSCVVRDATGNVNDTIVTELTNCTSAACKLNFDFSSCESSPCSYGLMNNFQVMSMVSGFTPLISAGIFSATLSSALASLVSAPKIFQALCKDNIYPAFQMFAKGYGKNNEPLRGYILTFLIALGFILIAELNVIAPIISNFFLASYALINFSVFHASLAKSPGWRPAFKYYNMWISLLGAILCCIVMFVINWWAALLTYVIVLGLYIYVTYKKPDVNWGSSTQALTYLNALQHSIRLSGVEDHVKNFRPQCLVMTGAPNSRPALLHLVHDFTKNVGLMICGHVHMGPRRQAMKEMSIDQAKYQRWLIKNKMKAFYAPVHADDLREGAQYLMQAAGLGRMKPNTLVLGFKKDWLQADMRDVDMYINLFHDAFDIQYGVVVIRLKEGLDISHLQGQEELLSSQEKSPGTKDVVVSVEYSKKSDLDTSKPLSEKPITHKVEEEDGKTATQPLLKKESKGPIVPLNVADQKLLEASTQFQKKQGKNTIDVWWLFDDGGLTLLIPYLLTTKKKWKDCKIRVFIGGKINRIDHDRRAMATLLSKFRIDFSDIMVLGDINTKPKKENIIAFEEIIEPYRLHEDDKEQDIADKMKEDEPWRITDNELELYKTKTYRQIRLNELLKEHSSTANIIVMSLPVARKGAVSSALYMAWLEALSKDLPPILLVRGNHQSVLTFYS.

Position 1 is an N-acetylmethionine (Met1). The Cytoplasmic portion of the chain corresponds to 1 to 286 (MEPRPTAPSS…AESKGVVKFG (286 aa)). Disordered stretches follow at residues 36–81 (GTAV…QSRF), 112–138 (GAKQTPADGEASGESEPAKGSEEAKGR), and 150–193 (SSAE…GGGS). Phosphoserine occurs at positions 77 and 79. An RFXV motif 1 motif is present at residues 80–83 (RFQV). Over residues 127-137 (EPAKGSEEAKG) the composition is skewed to basic and acidic residues. Residues 138-141 (RFRV) carry the RFXV motif 2 motif. Over residues 150-160 (SSAEDSLSDAA) the composition is skewed to low complexity. Residues Thr203, Thr207, and Thr212 each carry the phosphothreonine; by OXSR1 and STK39 modification. Residues Thr217 and Thr230 each carry the phosphothreonine modification. A Phosphoserine modification is found at Ser242. Thr266 carries the post-translational modification Phosphothreonine. The discontinuously helical transmembrane segment at 287–316 (WIKGVLVRCMLNIWGVMLFIRLSWIVGQAG) threads the bilayer. Leu297 is a Na(+) binding site. K(+) is bound by residues Asn298 and Ile299. Position 300 (Trp300) interacts with Na(+). Chloride contacts are provided by Gly301, Val302, and Met303. Residues 317–336 (IGLSVLVIMMATVVTTITGL) traverse the membrane as a helical segment. Residues 337 to 367 (STSAIATNGFVRGGGAYYLISRSLGPEFGGA) are Cytoplasmic-facing. A helical transmembrane segment spans residues 368 to 395 (IGLIFAFANAVAVAMYVVGFAETVVELL). Phe372 lines the chloride pocket. Tyr383 is a K(+) binding site. At 396-405 (KEHSILMIDE) the chain is on the extracellular side. Residues 406–429 (INDIRIIGAITVVILLGISVAGME) form a helical membrane-spanning segment. Residues 430–432 (WEA) are Cytoplasmic-facing. A helical transmembrane segment spans residues 433–454 (KAQIVLLVILLLAIGDFVIGTF). The Extracellular portion of the chain corresponds to 455–486 (IPLESKKPKGFFGYKSEIFNENFGPDFREEET). A discontinuously helical membrane pass occupies residues 487–504 (FFSVFAIFFPAATGILAG). The K(+) site is built by Pro496, Ala497, and Thr499. Pro496 and Ala497 together coordinate chloride. Chloride contacts are provided by Gly500 and Ile501. Residues 505–519 (ANISGDLADPQSAIP) lie on the Cytoplasmic side of the membrane. The chain crosses the membrane as a helical span at residues 520–541 (KGTLLAILITTLVYVGIAVSVG). The Extracellular portion of the chain corresponds to 542–598 (SCVVRDATGNVNDTIVTELTNCTSAACKLNFDFSSCESSPCSYGLMNNFQVMSMVSG). Asn553 and Asn562 each carry an N-linked (GlcNAc...) asparagine glycan. 2 disulfides stabilise this stretch: Cys563/Cys568 and Cys577/Cys582. The chain crosses the membrane as a helical span at residues 599 to 623 (FTPLISAGIFSATLSSALASLVSAP). Residues Ala610, Ser613, and Ser614 each coordinate Na(+). The Cytoplasmic portion of the chain corresponds to 624 to 651 (KIFQALCKDNIYPAFQMFAKGYGKNNEP). The next 2 helical transmembrane spans lie at 652-672 (LRGYILTFLIALGFILIAELN) and 673-691 (VIAPIISNFFLASYALINF). Positions 682 and 686 each coordinate chloride. Residues 692–714 (SVFHASLAKSPGWRPAFKYYNMW) are Cytoplasmic-facing. 2 helical membrane passes run 715-732 (ISLLGAILCCIVMFVINW) and 733-745 (WAALLTYVIVLGL). The Cytoplasmic segment spans residues 746–1212 (YIYVTYKKPD…NHQSVLTFYS (467 aa)). Positions 761 to 778 (STQALTYLNALQHSIRLS) are scissor helix. Phosphoserine occurs at positions 940 and 944. Positions 962–978 (LDTSKPLSEKPITHKVE) are enriched in basic and acidic residues. The segment at 962–989 (LDTSKPLSEKPITHKVEEEDGKTATQPL) is disordered. Position 994 is a phosphoserine (Ser994).

The protein belongs to the SLC12A transporter family. As to quaternary structure, homodimer; adopts a domain-swap conformation at the scissor helices connecting the transmembrane domain and C-terminal domain. In terms of processing, phosphorylated at Thr-203, Thr-207 and Thr-212 by OXSR1/OSR1 and STK39/SPAK downstream of WNK kinases (WNK1, WNK2, WNK3 or WNK4), promoting its activity. Expressed in many tissues.

It localises to the basolateral cell membrane. It catalyses the reaction K(+)(out) + 2 chloride(out) + Na(+)(out) = K(+)(in) + 2 chloride(in) + Na(+)(in). Its activity is regulated as follows. Activated following phosphorylation by OXSR1/OSR1 and STK39/SPAK downstream of WNK kinases (WNK1, WNK2, WNK3 or WNK4). Inhibited by bumetanide. Inhibited by furosemide. Functionally, cation-chloride cotransporter which mediates the electroneutral transport of chloride, potassium and/or sodium ions across the membrane. Plays a vital role in the regulation of ionic balance and cell volume. This chain is Solute carrier family 12 member 2 (SLC12A2), found in Homo sapiens (Human).